The sequence spans 245 residues: Eukaryotic translation initiation factor 4E type 2 (245 aa).

Residues methionine 1–asparagine 38 show a composition bias toward basic and acidic residues. The disordered stretch occupies residues methionine 1–alanine 52. Position 13 is a phosphoserine (serine 13). The EIF4EBP1/2/3 binding stretch occupies residues histidine 54 to glutamine 57. Tyrosine 78 to glutamate 79 contributes to the mRNA binding site. Residues tryptophan 95 to serine 99 form an EIF4EBP1/2/3 binding region. Residues histidine 110 and tryptophan 124–glutamate 125 contribute to the mRNA site. At lysine 134 the chain carries N6-acetyllysine; alternate. A Glycyl lysine isopeptide (Lys-Gly) (interchain with G-Cter in ISG15); alternate cross-link involves residue lysine 134. The segment at asparagine 150–glycine 157 is EIF4EBP1/2/3 binding. MRNA-binding positions include arginine 174–isoleucine 179 and lysine 222–proline 224. Residue lysine 222 forms a Glycyl lysine isopeptide (Lys-Gly) (interchain with G-Cter in ISG15) linkage.

The protein belongs to the eukaryotic initiation factor 4E family. As to quaternary structure, interacts with EIF4EBP1, EIF4EBP2 and EIF4EBP3. Does not interact with eIF4G (EIF4G1, EIF4G2 or EIF4G3). Component of the 4EHP-GYF2 complex, at least composed of EIF4E2, GIGYF2 and ZNF598. Interacts with GIGYF2 (via the 4EHP-binding motif); the interaction is direct. Interacts with EIF4ENIF1/4E-T (via YXXXXLphi motif); increasing affinity for the 7-methylguanosine-containing mRNA cap. Post-translationally, ubiquitinated by ARIH1. The consequences of ubiquitination are however unclear: according to a report, EIF4E2 ubiquitination leads to promote EIF4E2 cap-binding and protein translation arrest. According to another report ubiquitination leads to its subsequent degradation. ISGylation enhances its cap structure-binding activity and translation-inhibition activity.

It localises to the cytoplasm. Its subcellular location is the P-body. In terms of biological role, recognizes and binds the 7-methylguanosine-containing mRNA cap during an early step in the initiation. Acts as a repressor of translation initiation. In contrast to EIF4E, it is unable to bind eIF4G (EIF4G1, EIF4G2 or EIF4G3), suggesting that it acts by competing with EIF4E and block assembly of eIF4F at the cap. In P-bodies, component of a complex that promotes miRNA-mediated translational repression. Involved in virus-induced host response by mediating miRNA MIR34A-induced translational silencing which controls IFNB1 production by a negative feedback mechanism. Component of the 4EHP-GYF2 complex, a multiprotein complex that acts as a repressor of translation initiation. In association with GIGYF2, assists ribosome-associated quality control (RQC) by sequestering the mRNA cap, blocking ribosome initiation and decreasing the translational load on problematic messages. Part of a pathway that works in parallel to RQC-mediated degradation of the stalled nascent polypeptide. GIGYF2 and EIF4E2 work downstream and independently of ZNF598, which seems to work as a scaffold that can recruit them to faulty mRNA even if alternative recruitment mechanisms may exist. Its function is as follows. (Microbial infection) Upon SARS coronavirus-2/SARS-CoV-2 infection, the interaction with non-structural protein 2 (nsp2) with GIGYF2 enhances GIGYF2 binding to EIF4E2 and increases repression of translation initiation of genes involved in antiviral innate immune response such as IFNB1. The polypeptide is Eukaryotic translation initiation factor 4E type 2 (Homo sapiens (Human)).